The chain runs to 351 residues: Polyribonucleotide 5'-hydroxyl-kinase TK1956 (351 aa).

34-41 (GGVDSGKS) contacts ATP.

The cofactor is a divalent metal cation.

It carries out the reaction a 5'-end dephospho-2'-deoxyribonucleoside-DNA + ATP = a 5'-end 5'-phospho-2'-deoxyribonucleoside-DNA + ADP + H(+). It catalyses the reaction a 5'-end dephospho-ribonucleoside-RNA + ATP = a 5'-end 5'-phospho-ribonucleoside-RNA + ADP + H(+). Functionally, polynucleotide kinase that can phosphorylate the 5'-hydroxyl groups of both single-stranded RNA (ssRNA) and single-stranded DNA (ssDNA). Exhibits a strong preference for ssRNA. The protein is Polyribonucleotide 5'-hydroxyl-kinase TK1956 of Thermococcus kodakarensis (strain ATCC BAA-918 / JCM 12380 / KOD1) (Pyrococcus kodakaraensis (strain KOD1)).